The sequence spans 710 residues: Adenylosuccinate synthetase (710 aa).

Disordered stretches follow at residues 1–57 (MPVR…NHAK) and 82–112 (MDDEPSRGLQKPPSRARHAADANNNSASAQC). The span at 11–25 (NNSSSGVSNALSSSS) shows a compositional bias: low complexity. Residues 32–43 (SPSSRENSTPLS) are compositionally biased toward polar residues. GTP contacts are provided by residues 180–186 (GDEGKGK) and 210–212 (GHT). Asp181 serves as the catalytic Proton acceptor. Mg(2+) contacts are provided by Asp181 and Gly210. IMP is bound by residues 181–184 (DEGK), 208–211 (NAGH), Thr295, Lys309, Gln421, Thr437, and Lys567. The active-site Proton donor is His211. Position 563-569 (563-569 (AVTKKPR)) interacts with substrate. GTP is bound by residues Arg569 and 697–699 (GNG).

It belongs to the adenylosuccinate synthetase family. Homodimer. Mg(2+) serves as cofactor.

It localises to the cytoplasm. It carries out the reaction IMP + L-aspartate + GTP = N(6)-(1,2-dicarboxyethyl)-AMP + GDP + phosphate + 2 H(+). The protein operates within purine metabolism; AMP biosynthesis via de novo pathway; AMP from IMP: step 1/2. Plays an important role in the salvage pathway for purine nucleotide biosynthesis. Catalyzes the first committed step in the biosynthesis of AMP from IMP. This chain is Adenylosuccinate synthetase, found in Leishmania braziliensis.